Consider the following 595-residue polypeptide: Aspartate--tRNA(Asp/Asn) ligase (595 aa).

Position 175 (Glu-175) interacts with L-aspartate. The aspartate stretch occupies residues Gln-199–Lys-202. Residues Arg-221 and His-451 each contribute to the L-aspartate site. Arg-221–Glu-223 provides a ligand contact to ATP. Position 485 (Glu-485) interacts with ATP. Arg-492 contacts L-aspartate. Gly-537–Arg-540 contacts ATP.

Belongs to the class-II aminoacyl-tRNA synthetase family. Type 1 subfamily. In terms of assembly, homodimer.

It is found in the cytoplasm. It catalyses the reaction tRNA(Asx) + L-aspartate + ATP = L-aspartyl-tRNA(Asx) + AMP + diphosphate. Its function is as follows. Aspartyl-tRNA synthetase with relaxed tRNA specificity since it is able to aspartylate not only its cognate tRNA(Asp) but also tRNA(Asn). Reaction proceeds in two steps: L-aspartate is first activated by ATP to form Asp-AMP and then transferred to the acceptor end of tRNA(Asp/Asn). This is Aspartate--tRNA(Asp/Asn) ligase from Acidiphilium cryptum (strain JF-5).